The chain runs to 1187 residues: Disease resistance protein TAO1 (1187 aa).

The TIR domain occupies 38-202 (WLHPVFLSFR…KISKDVSDVL (165 aa)). Glutamate 113 is an active-site residue. The NB-ARC domain occupies 217–478 (EAHTTEITSL…FFRRERIETL (262 aa)). LRR repeat units follow at residues 498-522 (DKSL…GLDI), 611-633 (SRKL…KFNP), 635-658 (FLVK…PIRN), 660-679 (KWMD…FSTA), 680-703 (TNLQ…IGNA), 704-727 (TNLL…IGNL), 728-750 (TNLK…SFGN), 752-775 (TSLK…IGNI), 799-823 (NTNL…MLNL), 824-849 (TRLE…VINL), 870-894 (ATNL…IWNI), 895-918 (TNLQ…VENA), 920-942 (NLQS…IWRI), and 953-974 (CSSL…LILD).

It catalyses the reaction NAD(+) + H2O = ADP-D-ribose + nicotinamide + H(+). In terms of biological role, TIR-NB-LRR receptor-like protein that contributes to disease resistance induced by the Pseudomonas syringae type III effector AvrB. Acts additively with RPM1 to generate a full disease resistance response to P.syringae expressing this type III effector. This is Disease resistance protein TAO1 from Arabidopsis thaliana (Mouse-ear cress).